Reading from the N-terminus, the 341-residue chain is GTP 3',8-cyclase (341 aa).

One can recognise a Radical SAM core domain in the interval 11-231 (KRERPLRDLR…DLINQHMPTE (221 aa)). Residue arginine 20 participates in GTP binding. [4Fe-4S] cluster-binding residues include cysteine 27 and cysteine 31. Tyrosine 33 serves as a coordination point for S-adenosyl-L-methionine. Position 34 (cysteine 34) interacts with [4Fe-4S] cluster. Arginine 75 is a GTP binding site. Position 79 (glycine 79) interacts with S-adenosyl-L-methionine. Residue threonine 106 participates in GTP binding. Serine 130 provides a ligand contact to S-adenosyl-L-methionine. Lysine 167 lines the GTP pocket. Methionine 201 provides a ligand contact to S-adenosyl-L-methionine. [4Fe-4S] cluster contacts are provided by cysteine 265 and cysteine 268. Residue 270–272 (RAR) coordinates GTP. Cysteine 282 is a [4Fe-4S] cluster binding site.

The protein belongs to the radical SAM superfamily. MoaA family. As to quaternary structure, monomer and homodimer. Requires [4Fe-4S] cluster as cofactor.

It catalyses the reaction GTP + AH2 + S-adenosyl-L-methionine = (8S)-3',8-cyclo-7,8-dihydroguanosine 5'-triphosphate + 5'-deoxyadenosine + L-methionine + A + H(+). It functions in the pathway cofactor biosynthesis; molybdopterin biosynthesis. Its function is as follows. Catalyzes the cyclization of GTP to (8S)-3',8-cyclo-7,8-dihydroguanosine 5'-triphosphate. This is GTP 3',8-cyclase from Bacillus velezensis (strain DSM 23117 / BGSC 10A6 / LMG 26770 / FZB42) (Bacillus amyloliquefaciens subsp. plantarum).